Reading from the N-terminus, the 58-residue chain is Large ribosomal subunit protein uL30 (58 aa).

Belongs to the universal ribosomal protein uL30 family. Part of the 50S ribosomal subunit.

This chain is Large ribosomal subunit protein uL30, found in Vibrio vulnificus (strain CMCP6).